A 779-amino-acid chain; its full sequence is Glucan endo-1,3-beta-D-glucosidase 2 (779 aa).

Residues 1-71 (MCYSRQAIPP…SNPLADSQVN (71 aa)) form a disordered region. Over residues 57 to 71 (RTPSSSNPLADSQVN) the composition is skewed to polar residues. Residues 73–309 (DNIFQSPVLS…NGLICQLSAD (237 aa)) are beta-sandwich subdomain. The region spanning 73–779 (DNIFQSPVLS…WSLAYSGAFS (707 aa)) is the GH81 domain. The alpha/beta subdomain stretch occupies residues 309-400 (DSVPSIDMAA…LTNSFDMQVQ (92 aa)). Residues 375 to 779 (IASSLDSTVK…WSLAYSGAFS (405 aa)) are sufficient for catalytic activity. The segment at 415-779 (NKKADYSQEK…WSLAYSGAFS (365 aa)) is (alpha/beta)6 barrel subdomain. Asp526 is an active-site residue. The (1,3-beta-D-glucosyl)n site is built by His530, Asp607, Glu609, and Glu613. Catalysis depends on residues Glu609 and Glu613. Residues 678 to 680 (KID) are may provide specificity for triple-helical beta-glucan. Residue Tyr691 coordinates (1,3-beta-D-glucosyl)n.

Belongs to the glycosyl hydrolase 81 family.

It is found in the cytoplasm. The enzyme catalyses Hydrolysis of (1-&gt;3)-beta-D-glucosidic linkages in (1-&gt;3)-beta-D-glucans.. Its activity is regulated as follows. Inhibited by mercury ions. In terms of biological role, cleaves internal linkages in 1,3-beta-glucan. This chain is Glucan endo-1,3-beta-D-glucosidase 2, found in Saccharomyces cerevisiae (strain ATCC 204508 / S288c) (Baker's yeast).